Consider the following 288-residue polypeptide: DegV domain-containing protein (288 aa).

One can recognise a DegV domain in the interval 3–282 (IAVMTDSTSY…SGGLGLGYVG (280 aa)). 2 residues coordinate hexadecanoate: T62 and S95.

May bind long-chain fatty acids, such as palmitate, and may play a role in lipid transport or fatty acid metabolism. This is DegV domain-containing protein from Staphylococcus aureus.